The following is a 1194-amino-acid chain: Rho-associated protein kinase let-502 (1194 aa).

One can recognise a Protein kinase domain in the interval 68 to 330 (FRQLKVIGRG…VDEIRNHKFF (263 aa)). Residues 74 to 82 (IGRGAFGEV) and Lys97 each bind ATP. Catalysis depends on Asp190, which acts as the Proton acceptor. The AGC-kinase C-terminal domain occupies 331–402 (KNDEWTFETL…SNEYSPVKKL (72 aa)). Coiled-coil stretches lie at residues 436–844 (EEQY…MAKR) and 875–933 (GRIL…EYPQ). The RhoBD domain maps to 784 to 846 (EQNLKHIENQ…LEEEMAKRQP (63 aa)). Positions 961-1171 (IQIDGWLSLR…SQLRRFIEAS (211 aa)) constitute a PH domain. The Phorbol-ester/DAG-type zinc-finger motif lies at 1085–1138 (RHDFQELSYHTRTYCDDCGKKLSDFIRPTPAFECKNCHYKTHKEHIAQGTITMC).

The protein belongs to the protein kinase superfamily. AGC Ser/Thr protein kinase family. In terms of assembly, interacts with rho-1. It depends on Mg(2+) as a cofactor.

The protein resides in the cytoplasm. It is found in the cytoskeleton. It localises to the cleavage furrow. The catalysed reaction is L-seryl-[protein] + ATP = O-phospho-L-seryl-[protein] + ADP + H(+). The enzyme catalyses L-threonyl-[protein] + ATP = O-phospho-L-threonyl-[protein] + ADP + H(+). Activated by rho-1 binding. Functionally, negatively regulates mel-11 to relieve the inhibition of mlc-4, allowing contraction of the circumferentially oriented microfilaments in epidermal cells and thereby regulating myosin II contractility during spermathecal contraction, cleavage furrow contraction in early embryos, and embryonic elongation and morphogenesis. Required for P-cell migration. May also play a role in oocyte cellularization. This is Rho-associated protein kinase let-502 from Caenorhabditis briggsae.